A 577-amino-acid chain; its full sequence is Moesin (577 aa).

In terms of domain architecture, FERM spans 2–295 (PKTISVRVTT…GNHELYMRRR (294 aa)). Serine 74 carries the post-translational modification Phosphoserine. Residue lysine 79 is modified to N6-acetyllysine. At lysine 83 the chain carries N6-succinyllysine. Residues 115 to 120 (IYCPPE) carry the [IL]-x-C-x-x-[DE] motif motif. Phosphotyrosine is present on tyrosine 116. Cysteine 117 is modified (S-nitrosocysteine). 2 positions are modified to N6-acetyllysine: lysine 139 and lysine 165. Disordered regions lie at residues 322-342 (LLEN…KIER), 358-419 (TKKA…QLAS), and 468-518 (STPH…NERV). Positions 358–401 (TKKAQQELEEQTRRALELEQERKRAQSEAEKLAKERQEAEEAKE) are enriched in basic and acidic residues. The residue at position 407 (serine 407) is a Phosphoserine. The segment covering 492-518 (AELRADAMAKDRSEEERTTEAEKNERV) has biased composition (basic and acidic residues). Serine 527 carries the post-translational modification Phosphoserine. A Phosphothreonine; by ROCK2 and STK10 modification is found at threonine 558.

In resting T-cells, part of a PAG1-NHERF1-MSN complex which is disrupted upon TCR activation. Interacts with NHERF1. Interacts with PPP1R16B. Interacts with SELPLG and SYK; these interactions mediate the activation of SYK by SELPLG. Interacts with PDPN (via cytoplasmic domain); this interaction activates RHOA and promotes epithelial-mesenchymal transition. Interacts with SPN/CD43 cytoplasmic tail. Interacts with CD44. Interacts with ICAM2. Interacts with ICAM3 (via C-terminus). Interacts with PDZD8. Interacts with F-actin. Interacts with CD46. Interacts with PTPN6. Phosphorylation on Thr-558 by STK10 negatively regulates lymphocyte migration and polarization. Phosphorylation on Thr-558 is crucial for the formation of microvilli-like structures. Phosphorylation by ROCK2 suppresses the head-to-tail association of the N-terminal and C-terminal halves resulting in an opened conformation which is capable of actin and membrane-binding. In terms of processing, S-nitrosylation of Cys-117 is induced by interferon-gamma and oxidatively-modified low-densitity lipoprotein (LDL(ox)) implicating the iNOS-S100A8/9 transnitrosylase complex.

Its subcellular location is the cell membrane. The protein resides in the cytoplasm. It is found in the cytoskeleton. It localises to the apical cell membrane. The protein localises to the cell projection. Its subcellular location is the microvillus membrane. The protein resides in the microvillus. Functionally, ezrin-radixin-moesin (ERM) family protein that connects the actin cytoskeleton to the plasma membrane and thereby regulates the structure and function of specific domains of the cell cortex. Tethers actin filaments by oscillating between a resting and an activated state providing transient interactions between moesin and the actin cytoskeleton. Once phosphorylated on its C-terminal threonine, moesin is activated leading to interaction with F-actin and cytoskeletal rearrangement. These rearrangements regulate many cellular processes, including cell shape determination, membrane transport, and signal transduction. The role of moesin is particularly important in immunity acting on both T and B-cells homeostasis and self-tolerance, regulating lymphocyte egress from lymphoid organs. Modulates phagolysosomal biogenesis in macrophages. Also participates in immunologic synapse formation. This chain is Moesin, found in Mus musculus (Mouse).